The sequence spans 247 residues: RNA polymerase sigma factor FliA (247 aa).

Residues 22–94 form a sigma-70 factor domain-2 region; that stretch reads LIQRYAPLVK…MLDEVRKGDW (73 aa). Positions 49 to 52 match the Interaction with polymerase core subunit RpoC motif; that stretch reads DLMQ. Residues 102–171 form a sigma-70 factor domain-3 region; sequence NTRMVTDAIR…GLPEDTSLSH (70 aa). A sigma-70 factor domain-4 region spans residues 190–238; the sequence is AIAKLPERERLVLALYYDEELNLKEIGEVLGVSESRVSQLHSQCAARLR. A DNA-binding region (H-T-H motif) is located at residues 212–231; that stretch reads LKEIGEVLGVSESRVSQLHS.

Belongs to the sigma-70 factor family. FliA subfamily.

Its subcellular location is the cytoplasm. Functionally, sigma factors are initiation factors that promote the attachment of RNA polymerase to specific initiation sites and are then released. This sigma factor controls the expression of flagella-related genes. Required for the flagellin gene (fliC) expression. The chain is RNA polymerase sigma factor FliA from Pseudomonas aeruginosa (strain ATCC 15692 / DSM 22644 / CIP 104116 / JCM 14847 / LMG 12228 / 1C / PRS 101 / PAO1).